Here is a 306-residue protein sequence, read N- to C-terminus: Aspartate carbamoyltransferase catalytic subunit (306 aa).

The carbamoyl phosphate site is built by arginine 55 and threonine 56. Lysine 84 serves as a coordination point for L-aspartate. Carbamoyl phosphate contacts are provided by arginine 105, histidine 133, and glutamine 136. L-aspartate contacts are provided by arginine 166 and arginine 227. Carbamoyl phosphate is bound by residues leucine 265 and proline 266.

This sequence belongs to the aspartate/ornithine carbamoyltransferase superfamily. ATCase family. Heterododecamer (2C3:3R2) of six catalytic PyrB chains organized as two trimers (C3), and six regulatory PyrI chains organized as three dimers (R2).

It carries out the reaction carbamoyl phosphate + L-aspartate = N-carbamoyl-L-aspartate + phosphate + H(+). It participates in pyrimidine metabolism; UMP biosynthesis via de novo pathway; (S)-dihydroorotate from bicarbonate: step 2/3. Catalyzes the condensation of carbamoyl phosphate and aspartate to form carbamoyl aspartate and inorganic phosphate, the committed step in the de novo pyrimidine nucleotide biosynthesis pathway. The polypeptide is Aspartate carbamoyltransferase catalytic subunit (Neisseria gonorrhoeae (strain ATCC 700825 / FA 1090)).